The chain runs to 188 residues: UPF0301 protein XCV3063 (188 aa).

It belongs to the UPF0301 (AlgH) family.

In Xanthomonas euvesicatoria pv. vesicatoria (strain 85-10) (Xanthomonas campestris pv. vesicatoria), this protein is UPF0301 protein XCV3063.